The chain runs to 497 residues: Protein root UVB sensitive 6 (497 aa).

It belongs to the RUS1 family.

Its function is as follows. Required for normal embryo development. The protein is Protein root UVB sensitive 6 of Arabidopsis thaliana (Mouse-ear cress).